Reading from the N-terminus, the 309-residue chain is Thiamine-monophosphate kinase (309 aa).

Mg(2+)-binding residues include Asp-25, Thr-39, Ser-40, and Asp-41. Asp-48 lines the substrate pocket. Mg(2+) contacts are provided by Asp-69 and Asp-117. ATP contacts are provided by residues 116–117 (GD) and Arg-140. Asp-201 contributes to the Mg(2+) binding site. An ATP-binding site is contributed by Ser-203. Residue Asp-204 participates in Mg(2+) binding. The substrate site is built by Glu-250 and Trp-298.

It belongs to the thiamine-monophosphate kinase family.

It catalyses the reaction thiamine phosphate + ATP = thiamine diphosphate + ADP. Its pathway is cofactor biosynthesis; thiamine diphosphate biosynthesis; thiamine diphosphate from thiamine phosphate: step 1/1. Functionally, catalyzes the ATP-dependent phosphorylation of thiamine-monophosphate (TMP) to form thiamine-pyrophosphate (TPP), the active form of vitamin B1. The chain is Thiamine-monophosphate kinase from Pyrococcus horikoshii (strain ATCC 700860 / DSM 12428 / JCM 9974 / NBRC 100139 / OT-3).